The following is a 277-amino-acid chain: Pantothenate synthetase (277 aa).

26–33 (MGNLHEGH) provides a ligand contact to ATP. His-33 acts as the Proton donor in catalysis. Position 57 (Gln-57) interacts with (R)-pantoate. Gln-57 lines the beta-alanine pocket. 144–147 (GKKD) serves as a coordination point for ATP. Gln-150 provides a ligand contact to (R)-pantoate. ATP contacts are provided by residues Gly-173 and 181 to 184 (LSSR).

This sequence belongs to the pantothenate synthetase family. As to quaternary structure, homodimer.

It localises to the cytoplasm. The enzyme catalyses (R)-pantoate + beta-alanine + ATP = (R)-pantothenate + AMP + diphosphate + H(+). Its pathway is cofactor biosynthesis; (R)-pantothenate biosynthesis; (R)-pantothenate from (R)-pantoate and beta-alanine: step 1/1. Functionally, catalyzes the condensation of pantoate with beta-alanine in an ATP-dependent reaction via a pantoyl-adenylate intermediate. The protein is Pantothenate synthetase of Chromobacterium violaceum (strain ATCC 12472 / DSM 30191 / JCM 1249 / CCUG 213 / NBRC 12614 / NCIMB 9131 / NCTC 9757 / MK).